Here is a 197-residue protein sequence, read N- to C-terminus: Dephospho-CoA kinase (197 aa).

The DPCK domain occupies 4–197 (LIGLTGGIAT…VLKWLKTITK (194 aa)). Residue 12–17 (ATGKST) coordinates ATP.

Belongs to the CoaE family.

It is found in the cytoplasm. It catalyses the reaction 3'-dephospho-CoA + ATP = ADP + CoA + H(+). Its pathway is cofactor biosynthesis; coenzyme A biosynthesis; CoA from (R)-pantothenate: step 5/5. Its function is as follows. Catalyzes the phosphorylation of the 3'-hydroxyl group of dephosphocoenzyme A to form coenzyme A. In Lactiplantibacillus plantarum (strain ATCC BAA-793 / NCIMB 8826 / WCFS1) (Lactobacillus plantarum), this protein is Dephospho-CoA kinase.